The sequence spans 140 residues: Chorion class A protein Ld2/Ld41 (140 aa).

Residues 1-21 (MNSFAFLLVCIQACLVQSVFS) form the signal peptide.

This sequence belongs to the chorion protein family.

Its function is as follows. This protein is one of many from the eggshell of the gypsy moth. The protein is Chorion class A protein Ld2/Ld41 of Lymantria dispar (Gypsy moth).